The primary structure comprises 935 residues: C-1-tetrahydrofolate synthase, cytoplasmic (935 aa).

Residue Met-1 is modified to N-acetylmethionine. Residues 2 to 291 form a methylenetetrahydrofolate dehydrogenase and methenyltetrahydrofolate cyclohydrolase (D/C) domain region; it reads APAGILNGKV…MLMQSTVESA (290 aa). Residues 52–56 and 99–101 contribute to the substrate site; these read YINVK and VQL. The active site involves Lys-56. NADP(+) is bound by residues 172-174 and Ser-197; that span reads GRS. 272-276 contacts substrate; sequence PGGVG. Residues 310–935 form a formyltetrahydrofolate synthetase domain region; that stretch reads LNLKTPVPSD…PETEQVNGLF (626 aa). The residue at position 318 (Ser-318) is a Phosphoserine. Residue 380–387 participates in ATP binding; sequence TPLGEGKS. Residues Ser-413 and Ser-490 each carry the phosphoserine modification.

The protein in the N-terminal section; belongs to the tetrahydrofolate dehydrogenase/cyclohydrolase family. It in the C-terminal section; belongs to the formate--tetrahydrofolate ligase family. As to quaternary structure, homodimer.

The protein localises to the cytoplasm. It catalyses the reaction (6R)-5,10-methylene-5,6,7,8-tetrahydrofolate + NADP(+) = (6R)-5,10-methenyltetrahydrofolate + NADPH. The catalysed reaction is (6R)-5,10-methenyltetrahydrofolate + H2O = (6R)-10-formyltetrahydrofolate + H(+). It carries out the reaction (6S)-5,6,7,8-tetrahydrofolate + formate + ATP = (6R)-10-formyltetrahydrofolate + ADP + phosphate. It functions in the pathway one-carbon metabolism; tetrahydrofolate interconversion. Its function is as follows. Trifunctional enzyme that catalyzes the interconversion of three forms of one-carbon-substituted tetrahydrofolate: (6R)-5,10-methylene-5,6,7,8-tetrahydrofolate, 5,10-methenyltetrahydrofolate and (6S)-10-formyltetrahydrofolate. These derivatives of tetrahydrofolate are differentially required in nucleotide and amino acid biosynthesis, (6S)-10-formyltetrahydrofolate being required for purine biosynthesis while (6R)-5,10-methylene-5,6,7,8-tetrahydrofolate is used for serine and methionine biosynthesis for instance. The chain is C-1-tetrahydrofolate synthase, cytoplasmic (Mthfd1) from Rattus norvegicus (Rat).